The following is a 401-amino-acid chain: Phosphoglycerate kinase (401 aa).

Residues 23-25, arginine 39, 62-65, arginine 121, and arginine 154 each bind substrate; these read DFN and HLGR. ATP-binding positions include lysine 207, glycine 298, glutamate 329, and 355-358; that span reads GGDT.

Belongs to the phosphoglycerate kinase family. As to quaternary structure, monomer.

The protein localises to the cytoplasm. It carries out the reaction (2R)-3-phosphoglycerate + ATP = (2R)-3-phospho-glyceroyl phosphate + ADP. It participates in carbohydrate degradation; glycolysis; pyruvate from D-glyceraldehyde 3-phosphate: step 2/5. This Campylobacter fetus subsp. fetus (strain 82-40) protein is Phosphoglycerate kinase.